Here is a 78-residue protein sequence, read N- to C-terminus: Large ribosomal subunit protein bL28 (78 aa).

It belongs to the bacterial ribosomal protein bL28 family.

In Flavobacterium psychrophilum (strain ATCC 49511 / DSM 21280 / CIP 103535 / JIP02/86), this protein is Large ribosomal subunit protein bL28.